Consider the following 506-residue polypeptide: Lysine--tRNA ligase (506 aa).

Mg(2+) is bound by residues Glu416 and Glu423.

It belongs to the class-II aminoacyl-tRNA synthetase family. As to quaternary structure, homodimer. Requires Mg(2+) as cofactor.

The protein localises to the cytoplasm. It catalyses the reaction tRNA(Lys) + L-lysine + ATP = L-lysyl-tRNA(Lys) + AMP + diphosphate. The chain is Lysine--tRNA ligase (lysS) from Xylella fastidiosa (strain 9a5c).